An 83-amino-acid chain; its full sequence is uncharacterized protein (83 aa).

Residues 40-65 (RMQAGASPDEDNDVNGETSFSRSFGG) form a disordered region. Over residues 54–65 (NGETSFSRSFGG) the composition is skewed to polar residues.

This is an uncharacterized protein from Dictyostelium discoideum (Social amoeba).